The primary structure comprises 402 residues: NADH dehydrogenase [ubiquinone] 1 alpha subcomplex subunit 9, mitochondrial (402 aa).

A mitochondrion-targeting transit peptide spans Met1–Tyr43.

The protein belongs to the complex I NDUFA9 subunit family. In terms of assembly, complex I is composed of at least 49 different subunits. This a component of the hydrophobic protein fraction. Requires FAD as cofactor.

The protein resides in the mitochondrion matrix. Accessory subunit of the mitochondrial membrane respiratory chain NADH dehydrogenase (Complex I), that is believed not to be involved in catalysis. Complex I functions in the transfer of electrons from NADH to the respiratory chain. The immediate electron acceptor for the enzyme is believed to be ubiquinone. This chain is NADH dehydrogenase [ubiquinone] 1 alpha subcomplex subunit 9, mitochondrial, found in Arabidopsis thaliana (Mouse-ear cress).